Reading from the N-terminus, the 144-residue chain is MNLNSIEIQKIIPHRYPFLLVDKIIDMEVGKRAVGIKNVTINEPFFQGHFPDQPIMPGVLIVEAMAQVAAVICMGSEENEGKLGVFTGIDNCKFRKQVVPGDALHIEIEMTAFRRGIGKAEGKAYVDGQLACSASLTFALIDKA.

The active site involves histidine 49.

The protein belongs to the thioester dehydratase family. FabZ subfamily.

The protein resides in the cytoplasm. It carries out the reaction a (3R)-hydroxyacyl-[ACP] = a (2E)-enoyl-[ACP] + H2O. Its function is as follows. Involved in unsaturated fatty acids biosynthesis. Catalyzes the dehydration of short chain beta-hydroxyacyl-ACPs and long chain saturated and unsaturated beta-hydroxyacyl-ACPs. The protein is 3-hydroxyacyl-[acyl-carrier-protein] dehydratase FabZ of Alkaliphilus oremlandii (strain OhILAs) (Clostridium oremlandii (strain OhILAs)).